The sequence spans 311 residues: Formimidoylglutamase (311 aa).

Mn(2+)-binding residues include H122, D151, H153, D155, C242, and D244.

This sequence belongs to the arginase family. In terms of assembly, homodimer. The cofactor is Mn(2+).

The catalysed reaction is N-formimidoyl-L-glutamate + H2O = formamide + L-glutamate. It functions in the pathway amino-acid degradation; L-histidine degradation into L-glutamate; L-glutamate from N-formimidoyl-L-glutamate (hydrolase route): step 1/1. Functionally, catalyzes the conversion of N-formimidoyl-L-glutamate to L-glutamate and formamide. The protein is Formimidoylglutamase of Pseudomonas aeruginosa (strain ATCC 15692 / DSM 22644 / CIP 104116 / JCM 14847 / LMG 12228 / 1C / PRS 101 / PAO1).